The chain runs to 74 residues: Antimicrobial peptide 36.4 (74 aa).

Residues 1–22 (MKVNVLLAVFLVVMVVTDHCHA) form the signal peptide. A Lysine amide modification is found at lysine 39. The propeptide occupies 44 to 74 (LQMEARFQPQNKNYRKRELDLENLFTHMPDY).

It belongs to the non-disulfide-bridged peptide (NDBP) superfamily. Short antimicrobial peptide (group 4) family. In terms of tissue distribution, expressed by the venom gland.

The protein resides in the secreted. It is found in the target cell membrane. In terms of biological role, cationic host defense peptide that have antibacterial activity by breaking membranes. Is more effective on Gram-positive than on Gram-negative bacteria. The chain is Antimicrobial peptide 36.4 from Lychas mucronatus (Chinese swimming scorpion).